We begin with the raw amino-acid sequence, 409 residues long: Na(+)/H(+) antiporter NhaA 2 (409 aa).

Helical transmembrane passes span 10-30 (VAAGLLLLAAVVGLVVANTPA), 60-80 (GLLVVFFFIVAVELKHEFLAG), 89-109 (LVPAIAAVGGVVVPALVYLAI), 118-138 (GWPVPTATDIAFALGVLAVFG), 148-168 (FLLALAVLDDLIAIGIIAVFF), 171-191 (GLDLGALAIAVAGVVLFAVVG), 203-223 (IAVVALLVLVALVTWWATLSS), 224-244 (GIHATIAGVALGFALPRLSGL), 257-277 (IVLPLFAFSAALVAIPAIGLA), 283-303 (FWGIALALPLGKLVGITAGGL), 328-348 (LLGGIGFTVSLLMSELAFAGL), and 356-376 (TLAVLLGSGVAIVAAAVTLSI). Residues 384–409 (AGAAADDDDATRDDFPAHADGGPARA) form a disordered region.

The protein belongs to the NhaA Na(+)/H(+) (TC 2.A.33) antiporter family.

It localises to the cell membrane. It catalyses the reaction Na(+)(in) + 2 H(+)(out) = Na(+)(out) + 2 H(+)(in). In terms of biological role, na(+)/H(+) antiporter that extrudes sodium in exchange for external protons. The chain is Na(+)/H(+) antiporter NhaA 2 from Clavibacter michiganensis subsp. michiganensis (strain NCPPB 382).